Consider the following 276-residue polypeptide: Expansin-A25 (276 aa).

Residues 1-27 (MKLLEQMVYVECFMIIMATLLVSMSYG) form the signal peptide. The region spanning 73-183 (QGACGYGDLF…RRISCARTGG (111 aa)) is the Expansin-like EG45 domain. The Expansin-like CBD domain maps to 193–272 (YFLMILPYNV…NWGFGQTFDG (80 aa)).

It belongs to the expansin family. Expansin A subfamily.

The protein localises to the secreted. It is found in the cell wall. It localises to the membrane. Functionally, causes loosening and extension of plant cell walls by disrupting non-covalent bonding between cellulose microfibrils and matrix glucans. No enzymatic activity has been found. The sequence is that of Expansin-A25 (EXPA25) from Arabidopsis thaliana (Mouse-ear cress).